Consider the following 229-residue polypeptide: Somatolactin (229 aa).

The N-terminal stretch at 1–24 (MHLVSVIQRGVWAVLLWPNLLASS) is a signal peptide. Intrachain disulfides connect cysteine 29/cysteine 39, cysteine 87/cysteine 203, and cysteine 220/cysteine 228. 2 N-linked (GlcNAc...) asparagine glycosylation sites follow: asparagine 143 and asparagine 175.

This sequence belongs to the somatotropin/prolactin family.

The protein resides in the secreted. The sequence is that of Somatolactin from Cyclopterus lumpus (Lumpsucker).